Consider the following 275-residue polypeptide: Lectin (275 aa).

Residues 1–30 (MASLQTQMISFYLIFLSILLTTIFFFKVNS) form the signal peptide. D111 and G129 together coordinate D-glucose. The Mn(2+) site is built by E149 and D151. Positions 151, 153, 155, and 159 each coordinate Ca(2+). Mn(2+) is bound by residues D159 and H166. A propeptide spanning residues 211–217 (NSLEEEN) is cleaved from the precursor. D-glucose is bound by residues G246 and A247. Residues 270–275 (KQAADA) constitute a propeptide that is removed on maturation.

This sequence belongs to the leguminous lectin family. Heterotetramer of two alpha and two beta chains. In terms of processing, the mature form consists of two chains, alpha and beta, produced by cleavage of the immature protein. These remain cleaved, yet fold together to form one subunit.

Its function is as follows. D-mannose specific lectin. In Lens culinaris subsp. orientalis (Oriental wild lentil), this protein is Lectin.